The sequence spans 468 residues: Probable Xaa-Pro aminopeptidase pepP (468 aa).

Mn(2+) is bound by residues Asp265, Asp276, Glu399, and Glu439.

The protein belongs to the peptidase M24B family. It depends on Mn(2+) as a cofactor.

It catalyses the reaction Release of any N-terminal amino acid, including proline, that is linked to proline, even from a dipeptide or tripeptide.. Catalyzes the removal of a penultimate prolyl residue from the N-termini of peptides. The chain is Probable Xaa-Pro aminopeptidase pepP (pepP) from Aspergillus fumigatus (strain CBS 144.89 / FGSC A1163 / CEA10) (Neosartorya fumigata).